The chain runs to 259 residues: Electron transfer flavoprotein subunit beta (259 aa).

Belongs to the ETF beta-subunit/FixA family. Heterodimer of an alpha and a beta subunit. FAD is required as a cofactor. AMP serves as cofactor.

Functionally, the electron transfer flavoprotein serves as a specific electron acceptor for other dehydrogenases. It transfers the electrons to the main respiratory chain via ETF-ubiquinone oxidoreductase (ETF dehydrogenase). In Clostridium acetobutylicum (strain ATCC 824 / DSM 792 / JCM 1419 / IAM 19013 / LMG 5710 / NBRC 13948 / NRRL B-527 / VKM B-1787 / 2291 / W), this protein is Electron transfer flavoprotein subunit beta (etfB).